The following is a 321-amino-acid chain: Phospho-N-acetylmuramoyl-pentapeptide-transferase (321 aa).

A run of 10 helical transmembrane segments spans residues 1–21 (MVYLLAIIALLITFILVPVLI), 50–70 (MGGLTFLISIIITSILAIIFI), 76–96 (IILLLFVTIGFGLIGFIDDYI), 112–132 (FLAQIAIAVIFFILSQVFNLT), 140–160 (IPFINFEIPLSIAYVIFIVFW), 173–193 (GLDGLATGLSIIGFVMYAIMA), 198–218 (ATSIGLFCIIMIFALLGFLPF), 225–245 (VFMGDTGSLALGGIFATISIM), 250–270 (LSLLFIGFVFVAETLSVMIQV), and 300–320 (VVTVFWTVGLITGLIGLWIGV).

The protein belongs to the glycosyltransferase 4 family. MraY subfamily. It depends on Mg(2+) as a cofactor.

It is found in the cell membrane. The catalysed reaction is UDP-N-acetyl-alpha-D-muramoyl-L-alanyl-gamma-D-glutamyl-L-lysyl-D-alanyl-D-alanine + di-trans,octa-cis-undecaprenyl phosphate = Mur2Ac(oyl-L-Ala-gamma-D-Glu-L-Lys-D-Ala-D-Ala)-di-trans,octa-cis-undecaprenyl diphosphate + UMP. The protein operates within cell wall biogenesis; peptidoglycan biosynthesis. In terms of biological role, catalyzes the initial step of the lipid cycle reactions in the biosynthesis of the cell wall peptidoglycan: transfers peptidoglycan precursor phospho-MurNAc-pentapeptide from UDP-MurNAc-pentapeptide onto the lipid carrier undecaprenyl phosphate, yielding undecaprenyl-pyrophosphoryl-MurNAc-pentapeptide, known as lipid I. In Staphylococcus saprophyticus subsp. saprophyticus (strain ATCC 15305 / DSM 20229 / NCIMB 8711 / NCTC 7292 / S-41), this protein is Phospho-N-acetylmuramoyl-pentapeptide-transferase.